We begin with the raw amino-acid sequence, 748 residues long: MEALEVDDISPALEVTEDFFNSFDKLENGVHQSHVFGIHQVPEFLGNEISNKMKEQADGQNANTSQRSIIWERCKSSLFDAKTMNGIHAKEQNESTKRTYSDDPLLSEKEKGTSTFNLLRRLDRPHSVNDSLDHLEDAPKFKPGHNRSRSDVSHIDWKNIRKPAPLQRSSSQGMHCTSPFSEPRNKNMEANNEVRSSFTNILKKGFLETRITPESFWKGCYAEISQYELHIYGSDYSGNHNATDTYHLSHIESITITGSHETKLVNVIMTDDRYLQLKADSAWEAIDWGQKLWEAICALNLVPNYRSIHQDILKKQNNFSDGIRGCMENNVNKLTPSAMNISNGNQKNIIKTGTLYRLTIQSNWKAFTFVLSNSHFAAYQPSCLDEDPLLSYNIDACIAVQMDMLDGYDSCFQVIFPQDVLRLRTETRQRAQEWMDAIISAANSARKSDQSLLVPLRKKSKENQSVKDLQRSKRQSVTTSFLSLLTSLALERGLTAQSFKCAGCQRPIGLSNEKAKVCSYSGWYYCSTCHVDDGFIIPARLIHNWDTSKHKVSKQAKEFLEYVYEEPLIDVHQENPLLYRHVDALAHVVRLRQQLKSLRAYLFSCRAVVAEDLRRRIFPREYLFQQIHLYSLSDLQQVVEGKLAPFLLKIIKFATSHVYSCSLCSQKGFICEICNNGEILYPFEENSTSRCENCGAVFHSDCKVRTVPCPKCVRKELQKKQKSFWQQLDMDGSLDEACSMFELSYQST.

Disordered stretches follow at residues 88 to 107 (HAKE…PLLS) and 129 to 187 (NDSL…RNKN). Composition is skewed to basic and acidic residues over residues 129–140 (NDSLDHLEDAPK) and 148–159 (SRSDVSHIDWKN). The span at 167–180 (QRSSSQGMHCTSPF) shows a compositional bias: polar residues. 2 consecutive PH domains span residues 200 to 297 (NILK…EAIC) and 348 to 443 (NIIK…SAAN). The Phorbol-ester/DAG-type zinc finger occupies 656 to 709 (SHVYSCSLCSQKGFICEICNNGEILYPFEENSTSRCENCGAVFHSDCKVRTVPC).

It localises to the cytoplasm. The protein localises to the golgi apparatus. It is found in the cell membrane. Functionally, may play a role during muscle differentiation. This is Pleckstrin homology domain-containing family M member 3 (plekhm3) from Xenopus laevis (African clawed frog).